A 314-amino-acid polypeptide reads, in one-letter code: Porphobilinogen deaminase (314 aa).

S-(dipyrrolylmethanemethyl)cysteine is present on C249.

Belongs to the HMBS family. As to quaternary structure, monomer. Dipyrromethane is required as a cofactor.

It carries out the reaction 4 porphobilinogen + H2O = hydroxymethylbilane + 4 NH4(+). Its pathway is porphyrin-containing compound metabolism; protoporphyrin-IX biosynthesis; coproporphyrinogen-III from 5-aminolevulinate: step 2/4. Functionally, tetrapolymerization of the monopyrrole PBG into the hydroxymethylbilane pre-uroporphyrinogen in several discrete steps. The sequence is that of Porphobilinogen deaminase from Brucella abortus (strain S19).